The primary structure comprises 140 residues: Large ribosomal subunit protein uL15 (140 aa).

Positions 1–31 are disordered; it reads MDTKKFRGSRTCGGGTHKNRRGAGNRGGRGK.

Belongs to the universal ribosomal protein uL15 family. As to quaternary structure, part of the 50S ribosomal subunit.

Its function is as follows. Binds to the 23S rRNA. The protein is Large ribosomal subunit protein uL15 of Methanosarcina barkeri (strain Fusaro / DSM 804).